Reading from the N-terminus, the 329-residue chain is 4-hydroxythreonine-4-phosphate dehydrogenase (329 aa).

Residues His136 and Thr137 each contribute to the substrate site. Residues His166, His211, and His266 each contribute to the a divalent metal cation site. The substrate site is built by Lys274, Asn283, and Arg292.

It belongs to the PdxA family. Homodimer. Requires Zn(2+) as cofactor. Mg(2+) serves as cofactor. Co(2+) is required as a cofactor.

It is found in the cytoplasm. It carries out the reaction 4-(phosphooxy)-L-threonine + NAD(+) = 3-amino-2-oxopropyl phosphate + CO2 + NADH. It functions in the pathway cofactor biosynthesis; pyridoxine 5'-phosphate biosynthesis; pyridoxine 5'-phosphate from D-erythrose 4-phosphate: step 4/5. In terms of biological role, catalyzes the NAD(P)-dependent oxidation of 4-(phosphooxy)-L-threonine (HTP) into 2-amino-3-oxo-4-(phosphooxy)butyric acid which spontaneously decarboxylates to form 3-amino-2-oxopropyl phosphate (AHAP). In Pseudomonas putida (strain ATCC 47054 / DSM 6125 / CFBP 8728 / NCIMB 11950 / KT2440), this protein is 4-hydroxythreonine-4-phosphate dehydrogenase.